A 668-amino-acid chain; its full sequence is Acetoin catabolism regulatory protein (668 aa).

Residues 341–570 (LTGGDAALQL…NVLEYARAVC (230 aa)) enclose the Sigma-54 factor interaction domain. Residues 369–376 (GETGSGKE) and 433–442 (ADGGTLFLDE) each bind ATP. Over residues 586–606 (GPAPSAALPQPGPAQSPAAAP) the composition is skewed to low complexity. Residues 586–611 (GPAPSAALPQPGPAQSPAAAPFDPHQ) are disordered. Positions 630-649 (LSAVARQIGVSRMTLYRRME) form a DNA-binding region, H-T-H motif.

In terms of biological role, required for sigma-54-dependent transcription of acoXABC. In Cupriavidus necator (strain ATCC 17699 / DSM 428 / KCTC 22496 / NCIMB 10442 / H16 / Stanier 337) (Ralstonia eutropha), this protein is Acetoin catabolism regulatory protein (acoR).